Reading from the N-terminus, the 38-residue chain is Photosystem II reaction center protein Y (38 aa).

The Lumenal segment spans residues 1-4 (MSMR). A helical transmembrane segment spans residues 5–23 (LVVVLLPLGIALGWAVYNI). Over 24–38 (GKLAIEQWRRTGSKV) the chain is Stromal.

The protein belongs to the PsbY family. In terms of assembly, PSII is composed of 1 copy each of membrane proteins PsbA, PsbB, PsbC, PsbD, PsbE, PsbF, PsbH, PsbI, PsbJ, PsbK, PsbL, PsbM, PsbT, PsbX, PsbY, PsbZ, Psb30/Ycf12, at least 3 peripheral proteins of the oxygen-evolving complex and a large number of cofactors. It forms dimeric complexes.

The protein resides in the plastid. It is found in the cyanelle thylakoid membrane. Functionally, loosely associated component of the core of photosystem II (PSII), it is not always seen in crystals. PSII is a light-driven water plastoquinone oxidoreductase, using light energy to abstract electrons from H(2)O, generating a proton gradient subsequently used for ATP formation. The sequence is that of Photosystem II reaction center protein Y from Cyanophora paradoxa.